Reading from the N-terminus, the 201-residue chain is Small ribosomal subunit protein uS4 (201 aa).

Positions 1-42 (MARYTGPVTRKSRRLGTDLVGGDQSFEKRPYPPGQHGRARIK) are disordered. One can recognise an S4 RNA-binding domain in the interval 91-157 (SRLDNVVYRA…VPFQIARETA (67 aa)).

Belongs to the universal ribosomal protein uS4 family. In terms of assembly, part of the 30S ribosomal subunit. Contacts protein S5. The interaction surface between S4 and S5 is involved in control of translational fidelity.

In terms of biological role, one of the primary rRNA binding proteins, it binds directly to 16S rRNA where it nucleates assembly of the body of the 30S subunit. Functionally, with S5 and S12 plays an important role in translational accuracy. The protein is Small ribosomal subunit protein uS4 of Mycobacterium marinum (strain ATCC BAA-535 / M).